Here is a 374-residue protein sequence, read N- to C-terminus: Putative F-box/kelch-repeat protein At4g39756 (374 aa).

Positions 17–63 (CPSFLSLPEEILVNCLARIPKSYYPKLSLVCKSFCSLILSMELYVER) constitute an F-box domain. 4 Kelch repeats span residues 135–180 (ELYA…VING), 181–227 (KIYV…GMAV), 231–278 (KIYV…RQSC), and 280–308 (WYDTKHKEWRDIKGLATLNRRRRSSILEV).

The protein is Putative F-box/kelch-repeat protein At4g39756 of Arabidopsis thaliana (Mouse-ear cress).